The chain runs to 307 residues: Plasmodesmata-located protein 2 (307 aa).

An N-terminal signal peptide occupies residues 1–23 (MGLSISFLSIIMMMCLLFPDLNV). Residues 24–275 (VVKSATTEYT…STSTGATGKT (252 aa)) are Extracellular-facing. Gnk2-homologous domains are found at residues 33 to 136 (TTLI…VSGF) and 141 to 240 (GMEM…YYPN). 6 disulfide bridges follow: Cys-40–Cys-114, Cys-90–Cys-99, Cys-102–Cys-127, Cys-149–Cys-218, Cys-194–Cys-203, and Cys-206–Cys-231. The segment covering 246–268 (SSSSSSSSSSSSSGSSNSDPSTS) has biased composition (low complexity). Positions 246–270 (SSSSSSSSSSSSSGSSNSDPSTSTG) are disordered. The helical transmembrane segment at 276–296 (VAIIVGGAAGVGFLVICLLFA) threads the bilayer. Residues 276–296 (VAIIVGGAAGVGFLVICLLFA) are necessary and sufficient for plasmodesmal targeting. At 297 to 307 (KNLMRKKHDDY) the chain is on the cytoplasmic side.

It belongs to the cysteine-rich repeat secretory protein family. Plasmodesmata-located proteins (PDLD) subfamily. As to quaternary structure, (Microbial infection) Interacts with Grapevine fanleaf virus (GFLV) 2B-MP. As to expression, highly expressed in inflorescence shoot apex. Uniformly expressed within the inflorescence meristem with the exception of a boundary zone between floral primordia and the meristem where the expression is weaker (at protein level).

The protein localises to the cell membrane. It is found in the cell junction. Its subcellular location is the plasmodesma. Functionally, modulates cell-to-cell trafficking. This Arabidopsis thaliana (Mouse-ear cress) protein is Plasmodesmata-located protein 2.